Here is a 105-residue protein sequence, read N- to C-terminus: Small ribosomal subunit protein uS10 (105 aa).

Belongs to the universal ribosomal protein uS10 family. Part of the 30S ribosomal subunit.

Its function is as follows. Involved in the binding of tRNA to the ribosomes. The sequence is that of Small ribosomal subunit protein uS10 from Picosynechococcus sp. (strain ATCC 27264 / PCC 7002 / PR-6) (Agmenellum quadruplicatum).